We begin with the raw amino-acid sequence, 110 residues long: U1-lycotoxin-Ls1bb (110 aa).

The N-terminal stretch at 1 to 20 is a signal peptide; sequence MKFVLLFGVLLVTLFSYSSA. A propeptide spanning residues 21 to 44 is cleaved from the precursor; that stretch reads EMLDDFDQADEDELLSLIEKEEAR. 4 cysteine pairs are disulfide-bonded: C47-C62, C54-C71, C61-C89, and C73-C87.

This sequence belongs to the neurotoxin 19 (CSTX) family. 03 subfamily. As to expression, expressed by the venom gland.

The protein localises to the secreted. The polypeptide is U1-lycotoxin-Ls1bb (Lycosa singoriensis (Wolf spider)).